A 154-amino-acid chain; its full sequence is Resuscitation-promoting factor RpfD (154 aa).

A helical membrane pass occupies residues 21–41; sequence IVCTVFIETAVVATMFVALLG.

This sequence belongs to the transglycosylase family. Rpf subfamily.

The protein localises to the cell membrane. In terms of biological role, factor that stimulates resuscitation of dormant cells. Has peptidoglycan (PG) hydrolytic activity. PG fragments could either directly activate the resuscitation pathway of dormant bacteria or serve as a substrate for endogenous Rpf, resulting in low molecular weight products with resuscitation activity. The polypeptide is Resuscitation-promoting factor RpfD (rpfD) (Mycobacterium tuberculosis (strain CDC 1551 / Oshkosh)).